Reading from the N-terminus, the 148-residue chain is Protein GLUTAMINE DUMPER 3 (148 aa).

The segment at 1–24 (MEGRQYYPPRENVEGNRTTMGGGP) is disordered. The Extracellular portion of the chain corresponds to 1–34 (MEGRQYYPPRENVEGNRTTMGGGPHSPWHSPVPY). The helical transmembrane segment at 35-55 (LFGGLAAMLGLIAFALLILAC) threads the bilayer. At 56–148 (SYWRLSGYLD…RSSESNGETH (93 aa)) the chain is on the cytoplasmic side. The VIMAG motif lies at 99–103 (VIMAG). The segment covering 120–132 (CDDDDDEDDDVEG) has biased composition (acidic residues). Residues 120–148 (CDDDDDEDDDVEGSDQVVPRSSESNGETH) form a disordered region. Positions 138 to 148 (PRSSESNGETH) are enriched in polar residues.

Belongs to the GLUTAMINE DUMPER 1 (TC 9.B.60) family. As to expression, expressed in the vascular tissues. Also detected in anthers.

Its subcellular location is the membrane. Its function is as follows. Probable subunit of an amino acid transporter involved in the regulation of the amino acid metabolism. Stimulates amino acid export by activating nonselective amino acid facilitators. Acts upstream genes involved in the salicylic acid (SA) pathway and in the geminivirus-host interaction. The protein is Protein GLUTAMINE DUMPER 3 (GDU3) of Arabidopsis thaliana (Mouse-ear cress).